The following is a 316-amino-acid chain: MARFSPQDLADHLKDGLLSFPATAFQDDLEVDEVAYVEHIEWQSSYPVAGLFAAGGTGEGFSLTVEENHRVTQLAVQASSPEVPVLGSATGSTKSAIANAQGAEAAGAEGVLLLPPYLTECDAEGLYNHAAAVCESTSLGVIVYNRANAIYSPEVIARLSERYPNFIGFKDGTGNIEHLAKITTLCGDRLFYLGGLPTAETFALPLLQMGMSTYSSAMFNFIPDFALSFYADVRAQDSAAVKQKLSDFVLPYLDIRDRAQGYGVSIVKGGLKAVGRNAGGVRPPLRNLSEQDIADLSDLLATSGAGSYRLPVEVKA.

Belongs to the DapA family.

The enzyme catalyses 5-dehydro-4-deoxy-D-glucarate + H(+) = 2,5-dioxopentanoate + CO2 + H2O. Its pathway is carbohydrate acid metabolism; D-glucarate degradation; 2,5-dioxopentanoate from D-glucarate: step 2/2. This Corynebacterium glutamicum (strain R) protein is Probable 5-dehydro-4-deoxyglucarate dehydratase.